We begin with the raw amino-acid sequence, 85 residues long: UPF0335 protein Plav_2034 (85 aa).

It belongs to the UPF0335 family.

The chain is UPF0335 protein Plav_2034 from Parvibaculum lavamentivorans (strain DS-1 / DSM 13023 / NCIMB 13966).